We begin with the raw amino-acid sequence, 89 residues long: AADCNGACSPFEMPPCRSTDCRCIPIALFGGFCINPTGLSSVAKMIDEHPNLCQSDDECLKKGSGNFCARYPNHYMDYGWCFDSDSEAL.

Residue alanine 1 is a signal peptide. Cystine bridges form between cysteine 4/cysteine 21, cysteine 8/cysteine 23, and cysteine 16/cysteine 33. The propeptide occupies 39–46 (LSSVAKMI).

Post-translationally, the C-terminal glycine may be removed from A1b.

Its function is as follows. A1b binds to basic 7S globulin (BG) and stimulates its phosphorylation activity. The chain is Albumin-1 (LEG) from Vigna radiata var. radiata (Mung bean).